Reading from the N-terminus, the 445-residue chain is Chromosome partition protein MukF (445 aa).

The leucine-zipper stretch occupies residues 213–241 (LSETSATLRELQDTLQAAGDELQTQILDI).

The protein belongs to the MukF family. Interacts, and probably forms a ternary complex, with MukE and MukB via its C-terminal region. The complex formation is stimulated by calcium or magnesium. It is required for an interaction between MukE and MukB.

It localises to the cytoplasm. Its subcellular location is the nucleoid. Involved in chromosome condensation, segregation and cell cycle progression. May participate in facilitating chromosome segregation by condensation DNA from both sides of a centrally located replisome during cell division. Not required for mini-F plasmid partitioning. Probably acts via its interaction with MukB and MukE. Overexpression results in anucleate cells. It has a calcium binding activity. The chain is Chromosome partition protein MukF from Vibrio cholerae serotype O1 (strain ATCC 39315 / El Tor Inaba N16961).